The following is a 386-amino-acid chain: Succinate--CoA ligase [ADP-forming] subunit beta (386 aa).

One can recognise an ATP-grasp domain in the interval 9 to 244 (KEILRKYGVP…HDEEDPLETR (236 aa)). Residues Lys46, 53 to 55 (GRG), Glu99, Cys102, and Glu107 contribute to the ATP site. Asn199 and Asp213 together coordinate Mg(2+). Residues Asn264 and 321–323 (GIM) contribute to the substrate site.

The protein belongs to the succinate/malate CoA ligase beta subunit family. As to quaternary structure, heterotetramer of two alpha and two beta subunits. It depends on Mg(2+) as a cofactor.

It catalyses the reaction succinate + ATP + CoA = succinyl-CoA + ADP + phosphate. The catalysed reaction is GTP + succinate + CoA = succinyl-CoA + GDP + phosphate. The protein operates within carbohydrate metabolism; tricarboxylic acid cycle; succinate from succinyl-CoA (ligase route): step 1/1. Functionally, succinyl-CoA synthetase functions in the citric acid cycle (TCA), coupling the hydrolysis of succinyl-CoA to the synthesis of either ATP or GTP and thus represents the only step of substrate-level phosphorylation in the TCA. The beta subunit provides nucleotide specificity of the enzyme and binds the substrate succinate, while the binding sites for coenzyme A and phosphate are found in the alpha subunit. The chain is Succinate--CoA ligase [ADP-forming] subunit beta from Rickettsia prowazekii (strain Madrid E).